A 171-amino-acid chain; its full sequence is Co-chaperone protein HscB (171 aa).

Residues 2–74 enclose the J domain; the sequence is DYFTLFGLPA…LMRAEYLLSL (73 aa).

The protein belongs to the HscB family. In terms of assembly, interacts with HscA and stimulates its ATPase activity. Interacts with IscU.

In terms of biological role, co-chaperone involved in the maturation of iron-sulfur cluster-containing proteins. Seems to help targeting proteins to be folded toward HscA. The chain is Co-chaperone protein HscB from Shigella boydii serotype 18 (strain CDC 3083-94 / BS512).